The primary structure comprises 197 residues: Putative RNA-binding protein EEED8.12 (197 aa).

An RRM domain is found at 61 to 138; that stretch reads KSVFIGNVDF…RPIVVTAKRT (78 aa). The tract at residues 142-166 is disordered; that stretch reads GMGHGVRGSSRGTFGRGRGAARGAP.

The chain is Putative RNA-binding protein EEED8.12 from Caenorhabditis elegans.